The primary structure comprises 548 residues: Membrane protein insertase YidC (548 aa).

Residues 6-26 (NLLVIALLFVSFMIWQAWEQD) traverse the membrane as a helical segment. The disordered stretch occupies residues 28 to 55 (NPQPQAQQTTQTTTTAAGSAADQGVPAS). Low complexity predominate over residues 30–50 (QPQAQQTTQTTTTAAGSAADQ). Helical transmembrane passes span 350-370 (FVGNWGFSIIIITFIVRGIMY), 420-440 (LGGCFPLLIQMPIFLALYYML), 458-478 (LSAQDPYYILPILMGVTMFFI), and 499-519 (PVIFTVFFLWFPSGLVLYYIV).

The protein belongs to the OXA1/ALB3/YidC family. Type 1 subfamily. As to quaternary structure, interacts with the Sec translocase complex via SecD. Specifically interacts with transmembrane segments of nascent integral membrane proteins during membrane integration.

It is found in the cell inner membrane. Required for the insertion and/or proper folding and/or complex formation of integral membrane proteins into the membrane. Involved in integration of membrane proteins that insert both dependently and independently of the Sec translocase complex, as well as at least some lipoproteins. Aids folding of multispanning membrane proteins. This chain is Membrane protein insertase YidC, found in Escherichia coli O127:H6 (strain E2348/69 / EPEC).